The following is a 204-amino-acid chain: Protein LURP-one-related 14 (204 aa).

It belongs to the LOR family.

In terms of biological role, might be related to the phospholipid scramblase and tubby-like superfamily of membrane tethered transcription factors. The protein is Protein LURP-one-related 14 of Arabidopsis thaliana (Mouse-ear cress).